The sequence spans 637 residues: Threonine--tRNA ligase (637 aa).

Residues 1–61 (MITITLPDSS…ATDAAVRLIT (61 aa)) enclose the TGS domain. Residues 238–528 (DHRKLGAELD…LIEHFAGKFP (291 aa)) form a catalytic region. C329, H380, and H505 together coordinate Zn(2+).

It belongs to the class-II aminoacyl-tRNA synthetase family. Homodimer. Zn(2+) serves as cofactor.

Its subcellular location is the cytoplasm. It catalyses the reaction tRNA(Thr) + L-threonine + ATP = L-threonyl-tRNA(Thr) + AMP + diphosphate + H(+). In terms of biological role, catalyzes the attachment of threonine to tRNA(Thr) in a two-step reaction: L-threonine is first activated by ATP to form Thr-AMP and then transferred to the acceptor end of tRNA(Thr). Also edits incorrectly charged L-seryl-tRNA(Thr). This Desulfosudis oleivorans (strain DSM 6200 / JCM 39069 / Hxd3) (Desulfococcus oleovorans) protein is Threonine--tRNA ligase.